The following is a 164-amino-acid chain: Peptidyl-prolyl cis-trans isomerase A-like 4G (164 aa).

In terms of domain architecture, PPIase cyclophilin-type spans 7–163 (FFDITVDGKP…KKITIADCGQ (157 aa)).

The protein belongs to the cyclophilin-type PPIase family. PPIase A subfamily.

The protein resides in the cytoplasm. The enzyme catalyses [protein]-peptidylproline (omega=180) = [protein]-peptidylproline (omega=0). Its function is as follows. PPIases accelerate the folding of proteins. It catalyzes the cis-trans isomerization of proline imidic peptide bonds in oligopeptides. This chain is Peptidyl-prolyl cis-trans isomerase A-like 4G (PPIAL4G), found in Homo sapiens (Human).